Here is a 443-residue protein sequence, read N- to C-terminus: Light-independent protochlorophyllide reductase subunit N (443 aa).

3 residues coordinate [4Fe-4S] cluster: Cys-15, Cys-40, and Cys-99.

This sequence belongs to the BchN/ChlN family. As to quaternary structure, protochlorophyllide reductase is composed of three subunits; BchL, BchN and BchB. Forms a heterotetramer of two BchB and two BchN subunits. [4Fe-4S] cluster serves as cofactor.

The catalysed reaction is chlorophyllide a + oxidized 2[4Fe-4S]-[ferredoxin] + 2 ADP + 2 phosphate = protochlorophyllide a + reduced 2[4Fe-4S]-[ferredoxin] + 2 ATP + 2 H2O. Its pathway is porphyrin-containing compound metabolism; bacteriochlorophyll biosynthesis (light-independent). Functionally, component of the dark-operative protochlorophyllide reductase (DPOR) that uses Mg-ATP and reduced ferredoxin to reduce ring D of protochlorophyllide (Pchlide) to form chlorophyllide a (Chlide). This reaction is light-independent. The NB-protein (BchN-BchB) is the catalytic component of the complex. The sequence is that of Light-independent protochlorophyllide reductase subunit N from Heliobacterium modesticaldum (strain ATCC 51547 / Ice1).